Consider the following 67-residue polypeptide: MPQLDTSTWFTTILSTSFSIIHRLQLKLTTHIFSPNPTPKDLKTLKHHNPWDKKWTKSYLPLSLHQH.

The helical transmembrane segment at 8-24 threads the bilayer; sequence TWFTTILSTSFSIIHRL. Lysine 54 carries the post-translational modification N6-acetyllysine; alternate. Position 54 is an N6-succinyllysine; alternate (lysine 54). Lysine 57 bears the N6-acetyllysine mark.

Belongs to the ATPase protein 8 family. Component of the ATP synthase complex composed at least of ATP5F1A/subunit alpha, ATP5F1B/subunit beta, ATP5MC1/subunit c (homooctomer), MT-ATP6/subunit a, MT-ATP8/subunit 8, ATP5ME/subunit e, ATP5MF/subunit f, ATP5MG/subunit g, ATP5MK/subunit k, ATP5MJ/subunit j, ATP5F1C/subunit gamma, ATP5F1D/subunit delta, ATP5F1E/subunit epsilon, ATP5PF/subunit F6, ATP5PB/subunit b, ATP5PD/subunit d, ATP5PO/subunit OSCP. ATP synthase complex consists of a soluble F(1) head domain (subunits alpha(3) and beta(3)) - the catalytic core - and a membrane F(0) domain - the membrane proton channel (subunits c, a, 8, e, f, g, k and j). These two domains are linked by a central stalk (subunits gamma, delta, and epsilon) rotating inside the F1 region and a stationary peripheral stalk (subunits F6, b, d, and OSCP). Interacts with PRICKLE3.

It is found in the mitochondrion membrane. In terms of biological role, subunit 8, of the mitochondrial membrane ATP synthase complex (F(1)F(0) ATP synthase or Complex V) that produces ATP from ADP in the presence of a proton gradient across the membrane which is generated by electron transport complexes of the respiratory chain. ATP synthase complex consist of a soluble F(1) head domain - the catalytic core - and a membrane F(1) domain - the membrane proton channel. These two domains are linked by a central stalk rotating inside the F(1) region and a stationary peripheral stalk. During catalysis, ATP synthesis in the catalytic domain of F(1) is coupled via a rotary mechanism of the central stalk subunits to proton translocation. In vivo, can only synthesize ATP although its ATP hydrolase activity can be activated artificially in vitro. Part of the complex F(0) domain. The polypeptide is ATP synthase F(0) complex subunit 8 (Glis glis (Fat dormouse)).